The sequence spans 344 residues: Anthranilate phosphoribosyltransferase (344 aa).

5-phospho-alpha-D-ribose 1-diphosphate contacts are provided by residues G86, 89-90 (GD), T94, 96-99 (NIST), 114-122 (KHGNKSASG), and S126. G86 serves as a coordination point for anthranilate. Residue S98 participates in Mg(2+) binding. N117 contacts anthranilate. R172 is an anthranilate binding site. 2 residues coordinate Mg(2+): D231 and E232.

Belongs to the anthranilate phosphoribosyltransferase family. As to quaternary structure, homodimer. Mg(2+) serves as cofactor.

The catalysed reaction is N-(5-phospho-beta-D-ribosyl)anthranilate + diphosphate = 5-phospho-alpha-D-ribose 1-diphosphate + anthranilate. It participates in amino-acid biosynthesis; L-tryptophan biosynthesis; L-tryptophan from chorismate: step 2/5. In terms of biological role, catalyzes the transfer of the phosphoribosyl group of 5-phosphorylribose-1-pyrophosphate (PRPP) to anthranilate to yield N-(5'-phosphoribosyl)-anthranilate (PRA). The protein is Anthranilate phosphoribosyltransferase of Prochlorococcus marinus (strain MIT 9301).